We begin with the raw amino-acid sequence, 91 residues long: Probable insulin-like peptide gamma-type 1 (91 aa).

The signal sequence occupies residues 1-26 (MSSYRQTLFILIILIVIILFVNEGQG). 3 disulfides stabilise this stretch: Cys-37–Cys-66, Cys-49–Cys-79, and Cys-65–Cys-70.

The protein belongs to the insulin family.

It localises to the secreted. The sequence is that of Probable insulin-like peptide gamma-type 1 (ins-11) from Caenorhabditis elegans.